A 203-amino-acid polypeptide reads, in one-letter code: E3 ubiquitin-protein ligase RNF152 (203 aa).

The RING-type zinc finger occupies 12 to 55 (CQICFNYYSPRRRPKLLDCKHTCCSVCLQQMRTSQKDLRCPWCR). The chain crosses the membrane as a helical span at residues 167–187 (SGVCTVILVACVLVFLLGIVL).

It belongs to the RNF152 family.

It is found in the lysosome membrane. The catalysed reaction is S-ubiquitinyl-[E2 ubiquitin-conjugating enzyme]-L-cysteine + [acceptor protein]-L-lysine = [E2 ubiquitin-conjugating enzyme]-L-cysteine + N(6)-ubiquitinyl-[acceptor protein]-L-lysine.. Its pathway is protein modification; protein ubiquitination. Its function is as follows. E3 ubiquitin-protein ligase that acts as a negative regulator of mTORC1 signaling by mediating ubiquitination of RagA/RRAGA and RHEB. Catalyzes 'Lys-63'-linked polyubiquitination of RagA/RRAGA in response to amino acid starvation, thereby regulating mTORC1 signaling. Also mediates monoubiquitination of RHEB, promoting its association with the TSC-TBC complex and subsequent inhibition. Also mediates 'Lys-48'-linked polyubiquitination of target proteins and their subsequent targeting to the proteasome for degradation. This Gallus gallus (Chicken) protein is E3 ubiquitin-protein ligase RNF152.